The chain runs to 336 residues: Dihydrolipoyl dehydrogenase (336 aa).

Residues 34–42 (EKEVVGGIC), K51, and G115 each bind FAD. A disulfide bond links C42 and C47. NAD(+)-binding positions include 180-184 (GGGVI), E203, V237, and 264-267 (SVGT). Residues D304 and A312 each coordinate FAD.

This sequence belongs to the class-I pyridine nucleotide-disulfide oxidoreductase family. As to quaternary structure, homodimer. It depends on FAD as a cofactor.

The protein resides in the cytoplasm. It carries out the reaction N(6)-[(R)-dihydrolipoyl]-L-lysyl-[protein] + NAD(+) = N(6)-[(R)-lipoyl]-L-lysyl-[protein] + NADH + H(+). Lipoamide dehydrogenase is a component of the alpha-ketoacid dehydrogenase complexes. The protein is Dihydrolipoyl dehydrogenase (pdhD) of Acholeplasma laidlawii.